We begin with the raw amino-acid sequence, 517 residues long: Cell division cycle protein 73 (517 aa).

Over residues 124 to 135 (SEPEAKKPRLDG) the composition is skewed to basic and acidic residues. 2 disordered regions span residues 124–159 (SEPE…SAAK) and 306–326 (GHHA…LAKP). Positions 315–324 (DAPPGRPPLA) are enriched in pro residues.

Belongs to the CDC73 family. As to quaternary structure, component of the PAF1 complex which consists of at least cdc-73, ctr-9, leo-1, pafo-1 and rtfo-1.

It localises to the nucleus. Functionally, component of the PAF1 complex which is a multifunctional complex involved in transcription initiation via genetic interactions with TATA-binding proteins, elongation and transcription-coupled histone modification. This Caenorhabditis elegans protein is Cell division cycle protein 73.